The chain runs to 109 residues: Large ribosomal subunit protein uL24 (109 aa).

It belongs to the universal ribosomal protein uL24 family. In terms of assembly, part of the 50S ribosomal subunit.

Functionally, one of two assembly initiator proteins, it binds directly to the 5'-end of the 23S rRNA, where it nucleates assembly of the 50S subunit. One of the proteins that surrounds the polypeptide exit tunnel on the outside of the subunit. The polypeptide is Large ribosomal subunit protein uL24 (Ehrlichia canis (strain Jake)).